Reading from the N-terminus, the 787-residue chain is Putative pentatricopeptide repeat-containing protein At1g69350, mitochondrial (787 aa).

The transit peptide at 1 to 16 (MTQYMPLFRSCSSLRL) directs the protein to the mitochondrion. PPR repeat units follow at residues 33–63 (DPLPVTKLIESYAFMGSPDSSRLVFEAFPYP), 64–98 (DSFMYGVLIKCNVWCHLLDAAIDLYHRLVSETTQI), 99–134 (SKFVFPSVLRACAGSREHLSVGGKVHGRIIKGGVDD), 135–165 (DAVIETSLLCMYGQTGNLSDAEKVFDGMPVR), 166–200 (DLVAWSTLVSSCLENGEVVKALRMFKCMVDDGVEP), 201–235 (DAVTMISVVEGCAELGCLRIARSVHGQITRKMFDL), 236–266 (DETLCNSLLTMYSKCGDLLSSERIFEKIAKK), 267–301 (NAVSWTAMISSYNRGEFSEKALRSFSEMIKSGIEP), 302–336 (NLVTLYSVLSSCGLIGLIREGKSVHGFAVRRELDP), 338–368 (YESLSLALVELYAECGKLSDCETVLRVVSDR), 369–403 (NIVAWNSLISLYAHRGMVIQALGLFRQMVTQRIKP), 404–434 (DAFTLASSISACENAGLVPLGKQIHGHVIRT), 438–468 (DEFVQNSLIDMYSKSGSVDSASTVFNQIKHR), 469–503 (SVVTWNSMLCGFSQNGNSVEAISLFDYMYHSYLEM), 504–534 (NEVTFLAVIQACSSIGSLEKGKWVHHKLIIS), 538–568 (DLFTDTALIDMYAKCGDLNAAETVFRAMSSR), 569–603 (SIVSWSSMINAYGMHGRIGSAISTFNQMVESGTKP), 604–638 (NEVVFMNVLSACGHSGSVEEGKYYFNLMKSFGVSP), and 639–669 (NSEHFACFIDLLSRSGDLKEAYRTIKEMPFL). The tract at residues 674–749 (VWGSLVNGCR…VPGYSAIEID (76 aa)) is type E motif. Residues 750–780 (QKVFRFGAGEENRIQTDEIYRFLGNLQNLTN) are type E(+) motif.

It belongs to the PPR family. PCMP-E subfamily.

The protein localises to the mitochondrion. The chain is Putative pentatricopeptide repeat-containing protein At1g69350, mitochondrial (PCMP-E66) from Arabidopsis thaliana (Mouse-ear cress).